The primary structure comprises 293 residues: Ribosomal protein L11 methyltransferase (293 aa).

Residues threonine 145, glycine 166, aspartate 188, and asparagine 230 each coordinate S-adenosyl-L-methionine.

This sequence belongs to the methyltransferase superfamily. PrmA family.

It is found in the cytoplasm. It carries out the reaction L-lysyl-[protein] + 3 S-adenosyl-L-methionine = N(6),N(6),N(6)-trimethyl-L-lysyl-[protein] + 3 S-adenosyl-L-homocysteine + 3 H(+). Its function is as follows. Methylates ribosomal protein L11. The chain is Ribosomal protein L11 methyltransferase from Shewanella baltica (strain OS195).